The chain runs to 50 residues: Conotoxin Cal6.19 (50 aa).

The first 22 residues, 1-22 (MKVTCVLVLTLMALTVCQVATA), serve as a signal peptide directing secretion. Disulfide bonds link cysteine 24–cysteine 37, cysteine 30–cysteine 41, and cysteine 36–cysteine 46.

Expressed by the venom duct.

Its subcellular location is the secreted. Functionally, probable neurotoxin. This chain is Conotoxin Cal6.19, found in Californiconus californicus (California cone).